Reading from the N-terminus, the 246-residue chain is UDP-N-acetyl-D-mannosaminuronic acid transferase (246 aa).

The protein belongs to the glycosyltransferase 26 family.

The catalysed reaction is UDP-N-acetyl-alpha-D-mannosaminouronate + N-acetyl-alpha-D-glucosaminyl-di-trans,octa-cis-undecaprenyl diphosphate = beta-D-ManNAcA-(1-&gt;4)-alpha-D-GlcNAc-di-trans,octa-cis-undecaprenyl diphosphate + UDP + H(+). Its pathway is bacterial outer membrane biogenesis; enterobacterial common antigen biosynthesis. Its function is as follows. Catalyzes the synthesis of Und-PP-GlcNAc-ManNAcA (Lipid II), the second lipid-linked intermediate involved in enterobacterial common antigen (ECA) synthesis. In Escherichia coli (strain K12), this protein is UDP-N-acetyl-D-mannosaminuronic acid transferase.